The sequence spans 122 residues: Large ribosomal subunit protein uL14 (122 aa).

The protein belongs to the universal ribosomal protein uL14 family. As to quaternary structure, part of the 50S ribosomal subunit. Forms a cluster with proteins L3 and L19. In the 70S ribosome, L14 and L19 interact and together make contacts with the 16S rRNA in bridges B5 and B8.

Binds to 23S rRNA. Forms part of two intersubunit bridges in the 70S ribosome. The polypeptide is Large ribosomal subunit protein uL14 (Desulfosudis oleivorans (strain DSM 6200 / JCM 39069 / Hxd3) (Desulfococcus oleovorans)).